The sequence spans 338 residues: MAAPCAAQCLYRTGGLRLLQRISRLPHCHKDASLAHQCQFHRSFFWRKPKTSHSVVRPAIVRPAYPVPKHIQRPDYVSSSKVPEWPDYIEIKDEEQIQGLRRACQLARHILLLTGNSLKVGMTTDEIDFIVHQEAIRHNGYPSPLHYGGFPKSVCTSVNNVVCHGIPDSRPLQDGDIINIDVTVYLEGYHGDTSETFLIGSVNDQGRKLVDVARQCRDQAIAACGPGQPLCVIGNIISNIANSNGFRVCPYFIGHGIGEYFHGHPEIWHHANDNDLKMEEGMSFTIEPILMEGTSGFRILSDKWTAVSVDDKRSAQFEHTVVITSDGVEILTKLPEED.

A mitochondrion-targeting transit peptide spans 1-47 (MAAPCAAQCLYRTGGLRLLQRISRLPHCHKDASLAHQCQFHRSFFWR). Histidine 164 contacts substrate. A divalent metal cation contacts are provided by aspartate 181, aspartate 192, and histidine 255. Histidine 262 serves as a coordination point for substrate. A divalent metal cation is bound by residues glutamate 287 and glutamate 318.

Belongs to the peptidase M24A family. Methionine aminopeptidase type 1 subfamily. Co(2+) serves as cofactor. The cofactor is Zn(2+). Requires Mn(2+) as cofactor. It depends on Fe(2+) as a cofactor.

The protein resides in the mitochondrion. It catalyses the reaction Release of N-terminal amino acids, preferentially methionine, from peptides and arylamides.. Its function is as follows. Removes the N-terminal methionine from nascent proteins. The N-terminal methionine is often cleaved when the second residue in the primary sequence is small and uncharged (Met-Ala-, Cys, Gly, Pro, Ser, Thr, or Val). Requires deformylation of the N(alpha)-formylated initiator methionine before it can be hydrolyzed. In Danio rerio (Zebrafish), this protein is Methionine aminopeptidase 1D, mitochondrial (metap1d).